Reading from the N-terminus, the 2485-residue chain is Probable polyketide synthase 10 (2485 aa).

The Ketosynthase family 3 (KS3) domain occupies 8–447; that stretch reads EDDIAIIGVG…GANCCIILSE (440 aa). Residues Cys-184, His-325, and His-363 each act as for beta-ketoacyl synthase activity in the active site. An acyl/malonyl transferase region spans residues 636 to 669; sequence GIEASFIVGHSLGEISAAHCSGMIDLETLCYIIY. Ser-646 acts as the For acyl/malonyl transferase activity in catalysis. Residues 930 to 1054 are N-terminal hotdog fold; the sequence is PPITILGNES…GNFHISNNLF (125 aa). Residues 930-1220 enclose the PKS/mFAS DH domain; the sequence is PPITILGNES…SKSLTPIQDP (291 aa). Catalysis depends on His-964, which acts as the Proton acceptor; for dehydratase activity. Residues 1071–1220 form a C-terminal hotdog fold region; sequence NYSLIERDDL…SKSLTPIQDP (150 aa). The active-site Proton donor; for dehydratase activity is the Asp-1134. In terms of domain architecture, Carrier spans 2410 to 2485; sequence ESNKGIDGLL…NQLIKFLNKK (76 aa). At Ser-2447 the chain carries O-(pantetheine 4'-phosphoryl)serine.

Requires pantetheine 4'-phosphate as cofactor.

Probable polyketide synthase. This Dictyostelium discoideum (Social amoeba) protein is Probable polyketide synthase 10 (pks10).